The following is a 148-amino-acid chain: Puroindoline-A (148 aa).

A signal peptide spans M1–A19. Positions Q20–Y28 are excised as a propeptide. A propeptide spans Y147–W148 (removed in mature form).

Five disulfide bonds are present. As to expression, endosperm and aleurone layer of developing kernels. In the aleurone layer, mainly localized to starch granules and the surface of the plasma membrane, forming a uniform layer, also abundant in the intercellular space. In the endosperm, mainly localized to starch granules and the plasma membrane, but less abundant in the intercellular space. Not found in roots or coleoptiles.

It localises to the membrane. Its subcellular location is the secreted. It is found in the extracellular space. Its function is as follows. Acts as a membranotoxin, probably through its antibacterial and antifungal activities, contributing to the defense mechanism of the plant against predators. Forms monovalent cation-selective ion channels in membranes. Has antibacterial activity against the Gram-positive bacteria S.aureus and C.michiganensis, and the Gram-negative bacteria E.coli, P.syringae pv phaseoli, A.tumefaciens and E.carotovora subsp carotovora. Acts synergistically with PINB against bacteria. Contributes to grain texture and hardness. The chain is Puroindoline-A (PINA) from Triticum aestivum (Wheat).